The sequence spans 260 residues: Flap endonuclease Xni (260 aa).

Aspartate 105 lines the Mg(2+) pocket. Residues serine 164–alanine 254 form the 5'-3' exonuclease domain. 5 residues coordinate K(+): leucine 172, alanine 173, proline 181, isoleucine 183, and isoleucine 186. The interval glycine 185 to serine 190 is interaction with DNA.

Belongs to the Xni family. Requires Mg(2+) as cofactor. It depends on K(+) as a cofactor.

In terms of biological role, has flap endonuclease activity. During DNA replication, flap endonucleases cleave the 5'-overhanging flap structure that is generated by displacement synthesis when DNA polymerase encounters the 5'-end of a downstream Okazaki fragment. This is Flap endonuclease Xni from Shewanella sp. (strain ANA-3).